Here is a 421-residue protein sequence, read N- to C-terminus: Indole-3-pyruvate monooxygenase YUCCA8 (421 aa).

An FAD-binding site is contributed by 30-35; that stretch reads GAGPSG. Residue 201-206 participates in NADP(+) binding; it reads GCGNSG.

This sequence belongs to the FMO family. FAD serves as cofactor. As to expression, expressed in organs undergoing active growth and cell division.

The protein localises to the endoplasmic reticulum. It catalyses the reaction indole-3-pyruvate + NADPH + O2 + H(+) = (indol-3-yl)acetate + CO2 + NADP(+) + H2O. In terms of biological role, involved in auxin biosynthesis. Converts the indole-3-pyruvic acid (IPA) produced by the TAA family to indole-3-acetic acid (IAA). Seems not able to use tryptamine (TAM) as substrate. Probably responsible for auxin biosynthesis in leaves and involved in the regulation of lateral leaf growth. Required for maintaining water homeostasis and an appropriate root to shoot ratio. Required for the inhibition of root growth by ethylene in etiolated seedlings. Functions downstream of the ethylene-response transcription factor EIL1. The chain is Indole-3-pyruvate monooxygenase YUCCA8 from Oryza sativa subsp. indica (Rice).